The following is a 361-amino-acid chain: Phosphoserine aminotransferase (361 aa).

L-glutamate-binding residues include S9 and R42. Residues 76–77 (AR), W102, T153, D173, and Q196 each bind pyridoxal 5'-phosphate. Residue K197 is modified to N6-(pyridoxal phosphate)lysine. Residue 238-239 (NT) coordinates pyridoxal 5'-phosphate.

Belongs to the class-V pyridoxal-phosphate-dependent aminotransferase family. SerC subfamily. As to quaternary structure, homodimer. Pyridoxal 5'-phosphate serves as cofactor.

Its subcellular location is the cytoplasm. The enzyme catalyses O-phospho-L-serine + 2-oxoglutarate = 3-phosphooxypyruvate + L-glutamate. It carries out the reaction 4-(phosphooxy)-L-threonine + 2-oxoglutarate = (R)-3-hydroxy-2-oxo-4-phosphooxybutanoate + L-glutamate. The protein operates within amino-acid biosynthesis; L-serine biosynthesis; L-serine from 3-phospho-D-glycerate: step 2/3. Its pathway is cofactor biosynthesis; pyridoxine 5'-phosphate biosynthesis; pyridoxine 5'-phosphate from D-erythrose 4-phosphate: step 3/5. Functionally, catalyzes the reversible conversion of 3-phosphohydroxypyruvate to phosphoserine and of 3-hydroxy-2-oxo-4-phosphonooxybutanoate to phosphohydroxythreonine. The chain is Phosphoserine aminotransferase from Serratia proteamaculans (strain 568).